The following is a 783-amino-acid chain: Cation/H(+) antiporter 11 (783 aa).

The next 12 membrane-spanning stretches (helical) occupy residues 31–51, 61–81, 101–120, 135–155, 175–195, 205–225, 244–264, 276–295, 300–322, 360–380, 389–409, and 418–438; these read VVFG…FFCI, IGVS…PQLF, AALR…LMTV, VVIG…LNLF, VIVI…LLEL, LALS…IVAT, AVII…QWII, IYIH…FVFF, VLGP…ALEA, IFLT…LCLY, LAVS…YEAV, and ATYA…PMVV.

This sequence belongs to the monovalent cation:proton antiporter 2 (CPA2) transporter (TC 2.A.37) family. CHX (TC 2.A.37.4) subfamily. In terms of tissue distribution, specifically expressed in pollen.

It localises to the membrane. Its function is as follows. May operate as a cation/H(+) antiporter. The sequence is that of Cation/H(+) antiporter 11 (CHX11) from Arabidopsis thaliana (Mouse-ear cress).